Here is a 214-residue protein sequence, read N- to C-terminus: Thiamine pyrophosphokinase (214 aa).

It belongs to the thiamine pyrophosphokinase family.

It carries out the reaction thiamine + ATP = thiamine diphosphate + AMP + H(+). The protein operates within cofactor biosynthesis; thiamine diphosphate biosynthesis; thiamine diphosphate from thiamine: step 1/1. Catalyzes the ATP-dependent phosphorylation of thiamine to thiamine pyrophosphate. Is involved in thiamine salvage. This Bacillus subtilis (strain 168) protein is Thiamine pyrophosphokinase.